The following is a 218-amino-acid chain: Eukaryotic translation initiation factor 4E-1 (218 aa).

A disordered region spans residues 1–39 (MAEETDTRPASAGSRGRPAPEDDDREEGEITDLACAPSP). Residues 21 to 30 (EDDDREEGEI) show a composition bias toward acidic residues. 2 EIF4G-binding regions span residues 43–46 (HPLE) and 53–89 (FDNP…NNIN). MRNA contacts are provided by residues 61–66 (KQAAWG), Lys93, and 111–112 (WE). Cys116 and Cys154 form a disulfide bridge. Positions 137-146 (HTLLAMIGEQ) are EIF4G-binding. Residues 161 to 166 (RGKQER) and 206 to 210 (KKMDK) contribute to the mRNA site.

The protein belongs to the eukaryotic initiation factor 4E family. As to quaternary structure, EIF4F is a multi-subunit complex, the composition of which varies with external and internal environmental conditions. It is composed of at least EIF4A, EIF4E and EIF4G. EIF4E is also known to interact with other partners. In higher plants two isoforms of EIF4F have been identified, named isoform EIF4F and isoform EIF(iso)4F. Isoform EIF4F has subunits p220 and p26, whereas isoform EIF(iso)4F has subunits p82 and p28. According to the redox status, the Cys-116-Cys-154 disulfide bridge may have a role in regulating protein function by affecting its ability to bind capped mRNA. In terms of processing, phosphorylated upon oxygen deprivation.

It is found in the nucleus. The protein localises to the cytoplasm. Its function is as follows. Component of the protein complex eIF4F, which is involved in the recognition of the mRNA cap, ATP-dependent unwinding of 5'-terminal secondary structure and recruitment of mRNA to the ribosome. Recognizes and binds the 7-methylguanosine-containing mRNA cap during an early step in the initiation of protein synthesis and facilitates ribosome binding by inducing the unwinding of the mRNAs secondary structures. The polypeptide is Eukaryotic translation initiation factor 4E-1 (Zea mays (Maize)).